Consider the following 390-residue polypeptide: Exodeoxyribonuclease 7 large subunit (390 aa).

It belongs to the XseA family. In terms of assembly, heterooligomer composed of large and small subunits.

The protein localises to the cytoplasm. The enzyme catalyses Exonucleolytic cleavage in either 5'- to 3'- or 3'- to 5'-direction to yield nucleoside 5'-phosphates.. Functionally, bidirectionally degrades single-stranded DNA into large acid-insoluble oligonucleotides, which are then degraded further into small acid-soluble oligonucleotides. This Synechococcus sp. (strain CC9311) protein is Exodeoxyribonuclease 7 large subunit.